The chain runs to 236 residues: 2,3,4,5-tetrahydropyridine-2,6-dicarboxylate N-acetyltransferase (236 aa).

Belongs to the transferase hexapeptide repeat family. DapH subfamily.

The enzyme catalyses (S)-2,3,4,5-tetrahydrodipicolinate + acetyl-CoA + H2O = L-2-acetamido-6-oxoheptanedioate + CoA. It participates in amino-acid biosynthesis; L-lysine biosynthesis via DAP pathway; LL-2,6-diaminopimelate from (S)-tetrahydrodipicolinate (acetylase route): step 1/3. Functionally, catalyzes the transfer of an acetyl group from acetyl-CoA to tetrahydrodipicolinate. This is 2,3,4,5-tetrahydropyridine-2,6-dicarboxylate N-acetyltransferase from Lactobacillus helveticus (strain DPC 4571).